A 527-amino-acid chain; its full sequence is GMP synthase [glutamine-hydrolyzing] (527 aa).

In terms of domain architecture, Glutamine amidotransferase type-1 spans 4–202 (KILILDFGSQ…VLQICGARAD (199 aa)). Catalysis depends on cysteine 81, which acts as the Nucleophile. Catalysis depends on residues histidine 176 and glutamate 178. One can recognise a GMPS ATP-PPase domain in the interval 203–395 (WEMGNYIDEA…LGLPPAMVYR (193 aa)). Position 230-236 (230-236 (SGGVDSS)) interacts with ATP.

In terms of assembly, homodimer.

The enzyme catalyses XMP + L-glutamine + ATP + H2O = GMP + L-glutamate + AMP + diphosphate + 2 H(+). The protein operates within purine metabolism; GMP biosynthesis; GMP from XMP (L-Gln route): step 1/1. Catalyzes the synthesis of GMP from XMP. The protein is GMP synthase [glutamine-hydrolyzing] of Paraburkholderia phytofirmans (strain DSM 17436 / LMG 22146 / PsJN) (Burkholderia phytofirmans).